The chain runs to 450 residues: tRNA modification GTPase MnmE (450 aa).

3 residues coordinate (6S)-5-formyl-5,6,7,8-tetrahydrofolate: R25, E86, and R126. A TrmE-type G domain is found at G221–G373. N231 serves as a coordination point for K(+). Residues N231–S236, T250–T256, D275–G278, and N336–D339 each bind GTP. S235 contributes to the Mg(2+) binding site. K(+) contacts are provided by T250, L252, and T255. Position 256 (T256) interacts with Mg(2+). K450 contacts (6S)-5-formyl-5,6,7,8-tetrahydrofolate.

This sequence belongs to the TRAFAC class TrmE-Era-EngA-EngB-Septin-like GTPase superfamily. TrmE GTPase family. Homodimer. Heterotetramer of two MnmE and two MnmG subunits. It depends on K(+) as a cofactor.

It localises to the cytoplasm. Functionally, exhibits a very high intrinsic GTPase hydrolysis rate. Involved in the addition of a carboxymethylaminomethyl (cmnm) group at the wobble position (U34) of certain tRNAs, forming tRNA-cmnm(5)s(2)U34. The sequence is that of tRNA modification GTPase MnmE from Synechococcus sp. (strain CC9605).